We begin with the raw amino-acid sequence, 308 residues long: Tetraacyldisaccharide 4'-kinase (308 aa).

63-70 (SFGGNGKT) contacts ATP.

Belongs to the LpxK family.

It carries out the reaction a lipid A disaccharide + ATP = a lipid IVA + ADP + H(+). The protein operates within glycolipid biosynthesis; lipid IV(A) biosynthesis; lipid IV(A) from (3R)-3-hydroxytetradecanoyl-[acyl-carrier-protein] and UDP-N-acetyl-alpha-D-glucosamine: step 6/6. In terms of biological role, transfers the gamma-phosphate of ATP to the 4'-position of a tetraacyldisaccharide 1-phosphate intermediate (termed DS-1-P) to form tetraacyldisaccharide 1,4'-bis-phosphate (lipid IVA). This chain is Tetraacyldisaccharide 4'-kinase, found in Campylobacter jejuni subsp. jejuni serotype O:23/36 (strain 81-176).